The sequence spans 242 residues: Biosynthetic peptidoglycan transglycosylase (242 aa).

A helical membrane pass occupies residues 19 to 39; that stretch reads ILAALAVFWGGGIALFSVVPV.

This sequence belongs to the glycosyltransferase 51 family.

It localises to the cell inner membrane. It catalyses the reaction [GlcNAc-(1-&gt;4)-Mur2Ac(oyl-L-Ala-gamma-D-Glu-L-Lys-D-Ala-D-Ala)](n)-di-trans,octa-cis-undecaprenyl diphosphate + beta-D-GlcNAc-(1-&gt;4)-Mur2Ac(oyl-L-Ala-gamma-D-Glu-L-Lys-D-Ala-D-Ala)-di-trans,octa-cis-undecaprenyl diphosphate = [GlcNAc-(1-&gt;4)-Mur2Ac(oyl-L-Ala-gamma-D-Glu-L-Lys-D-Ala-D-Ala)](n+1)-di-trans,octa-cis-undecaprenyl diphosphate + di-trans,octa-cis-undecaprenyl diphosphate + H(+). It functions in the pathway cell wall biogenesis; peptidoglycan biosynthesis. Its function is as follows. Peptidoglycan polymerase that catalyzes glycan chain elongation from lipid-linked precursors. This is Biosynthetic peptidoglycan transglycosylase from Salmonella choleraesuis (strain SC-B67).